We begin with the raw amino-acid sequence, 561 residues long: TBC1 domain family member 24 (561 aa).

A 1,2-diacyl-sn-glycero-3-phospho-(1D-myo-inositol) contacts are provided by K36 and R40. Residues 45 to 236 (AQSHTLRGKV…RVFDVFLVEG (192 aa)) form the Rab-GAP TBC domain. A 1,2-diacyl-sn-glycero-3-phospho-(1D-myo-inositol) contacts are provided by residues K238, R242, and 293–297 (RLFSR). One can recognise a TLDc domain in the interval 343 to 556 (EIVSVKEMRD…IAAVEAWGFQ (214 aa)). A phosphoserine mark is found at S475 and S482.

Interacts with ARF6. In terms of tissue distribution, expressed in brain, particularly at the level of the cortex and the hippocampus. Expressed in the inner ear in spiral ganglion cells, a collection of neurons critical for hearing and balance.

The protein localises to the cell membrane. Its subcellular location is the cytoplasm. It is found in the cytoplasmic vesicle membrane. It localises to the presynapse. In terms of biological role, may act as a GTPase-activating protein for Rab family protein(s). Involved in neuronal projections development, probably through a negative modulation of ARF6 function. Involved in the regulation of synaptic vesicle trafficking. In Mus musculus (Mouse), this protein is TBC1 domain family member 24 (Tbc1d24).